Reading from the N-terminus, the 293-residue chain is Ribonuclease P/MRP protein subunit RPP1 (293 aa).

Belongs to the eukaryotic/archaeal RNase P protein component 3 family. As to quaternary structure, component of nuclear RNase P and RNase MRP complexes. RNase P consists of an RNA moiety and at least 9 protein subunits including POP1, POP3, POP4, POP5, POP6, POP7, POP8, RPP1 and RPR2. RNase MRP complex consists of an RNA moiety and at least 10 protein subunits including POP1, POP3, POP4, POP5, POP6, POP7, POP8, RMP1, RPP1 and SNM1, many of which are shared with the RNase P complex.

It is found in the nucleus. It carries out the reaction Endonucleolytic cleavage of RNA, removing 5'-extranucleotides from tRNA precursor.. Component of ribonuclease P, a protein complex that generates mature tRNA molecules by cleaving their 5'-ends. Also a component of RNase MRP, which cleaves pre-rRNA sequences. The chain is Ribonuclease P/MRP protein subunit RPP1 (RPP1) from Saccharomyces cerevisiae (strain ATCC 204508 / S288c) (Baker's yeast).